Here is a 1155-residue protein sequence, read N- to C-terminus: ATP-dependent helicase/deoxyribonuclease subunit B (1155 aa).

Residues 1-300 (MSLRFIVGRA…AHLEKYYFRH (300 aa)) enclose the UvrD-like helicase ATP-binding domain. An ATP-binding site is contributed by 8–15 (GRAGSGKS). One can recognise a UvrD-like helicase C-terminal domain in the interval 280–590 (TPVRFQKDSA…VVGTLERSRN (311 aa)). [4Fe-4S] cluster contacts are provided by cysteine 792, cysteine 1111, cysteine 1114, and cysteine 1120.

This sequence belongs to the helicase family. AddB/RexB type 1 subfamily. As to quaternary structure, heterodimer of AddA and AddB. The cofactor is Mg(2+). [4Fe-4S] cluster serves as cofactor.

Its function is as follows. The heterodimer acts as both an ATP-dependent DNA helicase and an ATP-dependent, dual-direction single-stranded exonuclease. Recognizes the chi site generating a DNA molecule suitable for the initiation of homologous recombination. The AddB subunit has 5' -&gt; 3' nuclease activity but not helicase activity. This chain is ATP-dependent helicase/deoxyribonuclease subunit B, found in Desulforamulus reducens (strain ATCC BAA-1160 / DSM 100696 / MI-1) (Desulfotomaculum reducens).